Consider the following 208-residue polypeptide: Putative dioxygenase RC0543 (208 aa).

The protein belongs to the intradiol ring-cleavage dioxygenase family.

The protein is Putative dioxygenase RC0543 of Rickettsia conorii (strain ATCC VR-613 / Malish 7).